The chain runs to 146 residues: Hemoglobin subunit beta (146 aa).

Residues glutamine 2 to histidine 146 enclose the Globin domain. Heme b contacts are provided by histidine 63 and histidine 92.

It belongs to the globin family. As to quaternary structure, heterotetramer of two alpha chains and two beta chains. Red blood cells.

Involved in oxygen transport from gills to the various peripheral tissues. The polypeptide is Hemoglobin subunit beta (hbb) (Pogonophryne scotti (Saddleback plunderfish)).